Here is a 158-residue protein sequence, read N- to C-terminus: Transcriptional regulatory protein DoeX (158 aa).

The HTH asnC-type domain occupies 3 to 64 (LDRYDLKILE…RLNTDVLVKR (62 aa)). The H-T-H motif DNA-binding region spans 22–41 (KSKLAEAINLSVSPCWERVR).

It localises to the cytoplasm. Functionally, acts as a transcriptional regulator. It binds DNA specifically to a fragment from the doeA promoter region. This Halomonas elongata (strain ATCC 33173 / DSM 2581 / NBRC 15536 / NCIMB 2198 / 1H9) protein is Transcriptional regulatory protein DoeX (doeX).